The primary structure comprises 412 residues: Gamma-glutamyl phosphate reductase (412 aa).

This sequence belongs to the gamma-glutamyl phosphate reductase family.

The protein localises to the cytoplasm. It carries out the reaction L-glutamate 5-semialdehyde + phosphate + NADP(+) = L-glutamyl 5-phosphate + NADPH + H(+). The protein operates within amino-acid biosynthesis; L-proline biosynthesis; L-glutamate 5-semialdehyde from L-glutamate: step 2/2. Catalyzes the NADPH-dependent reduction of L-glutamate 5-phosphate into L-glutamate 5-semialdehyde and phosphate. The product spontaneously undergoes cyclization to form 1-pyrroline-5-carboxylate. This chain is Gamma-glutamyl phosphate reductase, found in Bartonella bacilliformis (strain ATCC 35685 / KC583 / Herrer 020/F12,63).